The primary structure comprises 273 residues: HUWE1-associated protein modifying stress responses 2 (273 aa).

Disordered stretches follow at residues 146-181 (GKVPPAPPPPRTPRTPPKPPTGVTSQAVATESSSSV), 204-230 (ISMRSGDSPQDSGVASSGRRKTSFLED), and 251-273 (KRTSAQCSDGITDSPIQKRNRMV). The segment covering 149-165 (PPAPPPPRTPRTPPKPP) has biased composition (pro residues). Composition is skewed to polar residues over residues 170–181 (SQAVATESSSSV), 208–218 (SGDSPQDSGVA), and 254–267 (SAQCSDGITDSPIQ). The tract at residues 249 to 273 (IRKRTSAQCSDGITDSPIQKRNRMV) is nuclear localization signal.

Belongs to the HAPSTR1 family. In terms of assembly, homooligomer. Heterooligomer with HAPSTR1; the interaction is direct and stabilizes HAPSTR1 independently of HUWE1. Interacts with HUWE1. In terms of tissue distribution, expressed in a tissue-restricted manner compared to HAPSTR1.

It is found in the nucleus. Functionally, together with HAPSTR1 plays a central regulatory role in the cellular response to molecular stressors, such as DNA damage, nutrient scarcity, and protein misfolding. Regulates these multiple stress response signaling pathways by stabilizing HAPSTR1, but also independently of HAPSTR1. The chain is HUWE1-associated protein modifying stress responses 2 from Homo sapiens (Human).